Consider the following 179-residue polypeptide: Large ribosomal subunit protein uL6 (179 aa).

The protein belongs to the universal ribosomal protein uL6 family. As to quaternary structure, part of the 50S ribosomal subunit.

This protein binds to the 23S rRNA, and is important in its secondary structure. It is located near the subunit interface in the base of the L7/L12 stalk, and near the tRNA binding site of the peptidyltransferase center. The chain is Large ribosomal subunit protein uL6 from Bacillus anthracis.